The following is a 328-amino-acid chain: MSSTPNKHADYPRLVADIGGTNARFALETAPCVIEKVAVLPCKEYDTVTDAVRAYLNQSGATGVRHAAFAIANPILGDWVQMTNHHWAFSIETTRQALGLDTLILLNDFTAQALAVTQTSSKDLMQVGGQKPVEFAPKAVIGPGTGLGVSGLVHSPAGWVALAGEGGHTSFPPFDDMEVLIWQYAKNKYRHVSAERFLSGAGLSLIYETLAVKQKAEPAKLMPSEITEKALNCESPLCRQALDIFCAMLGTVASNLALTLGARGGVYLCGGIIPRMLDYFKTSPFRSRFENKGRFEAYLAAIPVYVVLSEFPGIAGAAAALGNHLKNV.

16–21 is an ATP binding site; sequence ADIGGT.

It belongs to the bacterial glucokinase family.

It is found in the cytoplasm. It carries out the reaction D-glucose + ATP = D-glucose 6-phosphate + ADP + H(+). This Neisseria gonorrhoeae (strain ATCC 700825 / FA 1090) protein is Glucokinase.